The chain runs to 126 residues: Large ribosomal subunit protein bL12 (126 aa).

This sequence belongs to the bacterial ribosomal protein bL12 family. As to quaternary structure, homodimer. Part of the ribosomal stalk of the 50S ribosomal subunit. Forms a multimeric L10(L12)X complex, where L10 forms an elongated spine to which 2 to 4 L12 dimers bind in a sequential fashion. Binds GTP-bound translation factors.

In terms of biological role, forms part of the ribosomal stalk which helps the ribosome interact with GTP-bound translation factors. Is thus essential for accurate translation. This chain is Large ribosomal subunit protein bL12, found in Helicobacter hepaticus (strain ATCC 51449 / 3B1).